The chain runs to 180 residues: Ribosome maturation factor RimM (180 aa).

In terms of domain architecture, PRC barrel spans 97 to 176; the sequence is EGEFFYCDLI…KITTNNAKTL (80 aa).

Belongs to the RimM family. As to quaternary structure, binds ribosomal protein uS19.

It localises to the cytoplasm. Its function is as follows. An accessory protein needed during the final step in the assembly of 30S ribosomal subunit, possibly for assembly of the head region. Essential for efficient processing of 16S rRNA. May be needed both before and after RbfA during the maturation of 16S rRNA. It has affinity for free ribosomal 30S subunits but not for 70S ribosomes. The chain is Ribosome maturation factor RimM from Helicobacter acinonychis (strain Sheeba).